Reading from the N-terminus, the 151-residue chain is Deoxyuridine 5'-triphosphate nucleotidohydrolase (151 aa).

Substrate contacts are provided by residues R70–G72, N83, L87–D89, and M97.

This sequence belongs to the dUTPase family. Homotrimer. Mg(2+) is required as a cofactor.

It catalyses the reaction dUTP + H2O = dUMP + diphosphate + H(+). Its pathway is pyrimidine metabolism; dUMP biosynthesis; dUMP from dCTP (dUTP route): step 2/2. Functionally, this enzyme is involved in nucleotide metabolism: it produces dUMP, the immediate precursor of thymidine nucleotides and it decreases the intracellular concentration of dUTP so that uracil cannot be incorporated into DNA. In Escherichia coli (strain K12 / MC4100 / BW2952), this protein is Deoxyuridine 5'-triphosphate nucleotidohydrolase.